We begin with the raw amino-acid sequence, 234 residues long: Large ribosomal subunit protein uL1 (234 aa).

Belongs to the universal ribosomal protein uL1 family. As to quaternary structure, part of the 50S ribosomal subunit.

Its function is as follows. Binds directly to 23S rRNA. The L1 stalk is quite mobile in the ribosome, and is involved in E site tRNA release. In terms of biological role, protein L1 is also a translational repressor protein, it controls the translation of the L11 operon by binding to its mRNA. This Sulfurovum sp. (strain NBC37-1) protein is Large ribosomal subunit protein uL1.